The sequence spans 451 residues: AAA-ATPase At3g28570, mitochondrial (451 aa).

The transit peptide at 1–48 (MFAENLTRIGSNVAGLFFVWSTLKRYFPRQIQQLLFNAIQRIPIFKRL) directs the protein to the mitochondrion. 243–250 (GPPGTGKS) is a binding site for ATP.

Belongs to the AAA ATPase family. BCS1 subfamily. Mg(2+) serves as cofactor.

Its subcellular location is the mitochondrion. The enzyme catalyses ATP + H2O = ADP + phosphate + H(+). This Arabidopsis thaliana (Mouse-ear cress) protein is AAA-ATPase At3g28570, mitochondrial.